Here is a 471-residue protein sequence, read N- to C-terminus: UDP-N-acetylmuramate--L-alanine ligase (471 aa).

114-120 is a binding site for ATP; the sequence is GTHGKTT.

This sequence belongs to the MurCDEF family.

The protein localises to the cytoplasm. It catalyses the reaction UDP-N-acetyl-alpha-D-muramate + L-alanine + ATP = UDP-N-acetyl-alpha-D-muramoyl-L-alanine + ADP + phosphate + H(+). Its pathway is cell wall biogenesis; peptidoglycan biosynthesis. In terms of biological role, cell wall formation. This Chlorobaculum parvum (strain DSM 263 / NCIMB 8327) (Chlorobium vibrioforme subsp. thiosulfatophilum) protein is UDP-N-acetylmuramate--L-alanine ligase.